The primary structure comprises 443 residues: Threonine/serine transporter TdcC (443 aa).

11 helical membrane-spanning segments follow: residues 22-42 (TTWT…FFPI), 44-64 (AGFG…PIAF), 97-117 (GVVI…IYGV), 140-160 (FVAL…KDLM), 163-183 (VMSY…LSLI), 207-227 (ILVT…FSPI), 261-281 (MLMV…LSPA), 319-339 (ASII…LGTL), 366-386 (ISMI…PNIL), 389-409 (IEAM…MYAI), and 423-443 (DNVF…YKLF).

The protein belongs to the amino acid/polyamine transporter 2 family. SdaC/TdcC subfamily.

The protein resides in the cell inner membrane. The enzyme catalyses L-threonine(in) + H(+)(in) = L-threonine(out) + H(+)(out). The catalysed reaction is L-serine(in) + H(+)(in) = L-serine(out) + H(+)(out). Involved in the import of threonine and serine into the cell, with the concomitant import of a proton (symport system). The chain is Threonine/serine transporter TdcC from Citrobacter koseri (strain ATCC BAA-895 / CDC 4225-83 / SGSC4696).